Reading from the N-terminus, the 308-residue chain is MLTDRVLATKEALVVALGDNWERYRANMKNWFRSRWTKEEFDAESRKILTPDKLHLHNQFLLALLNKIDAFAPLENPPAVQTSSSSGNRSKRRKRSSRTFAERLNFELSDVLDFVAEDNMQIIRPPTTIGIPSDQQQQQLQSQRYCAQELFLPDAGFIMGRFLIGAWEIGLVSVDDNVAEYVAMAVQVLLKDLLSAIIKKRKHYKTSGEGNFYYDVGAPLRDPSLRNTVTRQKVDDTPLELDKELNTANFMRRQNDDVTFLSACEEVQPTERTVITLKDCQLALRDRNLIGSHAVYSINMERLNMMMH.

This sequence belongs to the TADA1 family. In terms of assembly, component of the Spt-Ada-Gcn5 acetyltransferase (SAGA) complex consisting of wda/Taf5L, Saf6, Taf9, Taf10b, Taf12, Ada1, Spt3, Spt7, Spt20, Sf3b3, Sf3b5, Nipped-A/Tra1, a histone acetyltransferase (HAT) module made up of Gcn5, Ada2b (Isoform B), Ada3 and Sgf29, and a deubiquitinase (DUB) module made up of not/nonstop, Sgf11 and e(y)2 tethered to SAGA by Atxn7. Not a component of the Ada2a-containing ATAC complex.

The protein localises to the nucleus. Functionally, component of the transcription regulatory complex SAGA, a multiprotein complex that activates transcription by remodeling chromatin and mediating histone acetylation and deubiquitination. The SAGA complex predominantly acetylates histone H3. In Drosophila melanogaster (Fruit fly), this protein is Transcriptional adapter 1-2.